The sequence spans 292 residues: MSMPATSTKTTKLATSLIDEYALLGWRAMLTEVNLSPKPGLVDRINCGAHKDMALEDFHRSALAIQGWLPRFIEFGACSAEMAPEAVLHGLRPIGMACEGDMFRATAGVNTHKGSIFSLGLLCAAIGRLLQLNQPVTPTTVCSTAASFCRGLTDRELRTNNSRLTAGQRLYQQLGLTGARGEAEAGYPLVINHALPHYLTLLDQGLDPELALLDTLLLLMATNGDTNVASRGGEGGLRWLQREAQTLLQKGGIRTPTDLDYLRQFDRECIERNLSPGGSADLLILTWFLAQI.

This sequence belongs to the CitG/MdcB family.

The catalysed reaction is 3'-dephospho-CoA + ATP = 2'-(5''-triphospho-alpha-D-ribosyl)-3'-dephospho-CoA + adenine. In Shigella flexneri serotype 5b (strain 8401), this protein is Probable 2-(5''-triphosphoribosyl)-3'-dephosphocoenzyme-A synthase.